A 222-amino-acid polypeptide reads, in one-letter code: Probable glutathione-independent glyoxalase hsp3104 (222 aa).

Residues Cys-124, His-125, and Glu-155 contribute to the active site.

This sequence belongs to the peptidase C56 family. HSP31-like subfamily.

The protein localises to the cytoplasm. The catalysed reaction is methylglyoxal + H2O = (R)-lactate + H(+). In terms of biological role, catalyzes the conversion of methylglyoxal (MG) to D-lactate in a single glutathione (GSH)-independent step. May play a role in detoxifying endogenously produced glyoxals. Involved in protection against reactive oxygen species (ROS). The protein is Probable glutathione-independent glyoxalase hsp3104 of Schizosaccharomyces pombe (strain 972 / ATCC 24843) (Fission yeast).